A 125-amino-acid chain; its full sequence is MEASRNRSLVGNNRSPEMNENDGEDVAASAAVEDVEVWDTLSNGFKRAQLYLDQNRDLIQRVNENHMSRIPDNVSRNVGLINEINGNISQVMEIYSDLSLNFAKKFDQRRRTTKDGDTTTTTTGS.

Residues 1-18 (MEASRNRSLVGNNRSPEM) show a composition bias toward polar residues. The interval 1 to 28 (MEASRNRSLVGNNRSPEMNENDGEDVAA) is disordered.

It belongs to the EARLY FLOWERING 4 family. Homodimer.

It is found in the nucleus. Functionally, component of the central CCA1/LHY-TOC1 feedback loop in the circadian clock that promotes clock accuracy and is required for sustained rhythms in the absence of daily light/dark cycles. This is Protein ELF4-LIKE 1 (EFL1) from Arabidopsis thaliana (Mouse-ear cress).